The following is a 121-amino-acid chain: Large ribosomal subunit protein bL20 (121 aa).

The protein belongs to the bacterial ribosomal protein bL20 family.

In terms of biological role, binds directly to 23S ribosomal RNA and is necessary for the in vitro assembly process of the 50S ribosomal subunit. It is not involved in the protein synthesizing functions of that subunit. This Roseobacter denitrificans (strain ATCC 33942 / OCh 114) (Erythrobacter sp. (strain OCh 114)) protein is Large ribosomal subunit protein bL20.